Consider the following 294-residue polypeptide: MDSINQVLKLGLPKGSLQDSTIDLFAQAGFHFSVQSRSYFPSIDDDELEAILIRAQEMAHYVELGAFDVGLTGKDWIIETDADVVEVADLVYSKASMRPVRWVLCVPESSTVRSVKDLEGKHIATEVVNITRKYLAKNGVNAMVEFSWGATEVKPPDLADAIVEVTETGSSLRANKLRIVDTILESNTKLIANKASWNDPWKREKIENMAMLLLGAINAQGKVGLKMNAPKSAIDKILAIIPALRQPTISSLAEEQWVALEVIVSEKTVRKLIPELKRAGAEGIFEYNINKLID.

It belongs to the ATP phosphoribosyltransferase family. Long subfamily. Mg(2+) serves as cofactor.

It is found in the cytoplasm. It carries out the reaction 1-(5-phospho-beta-D-ribosyl)-ATP + diphosphate = 5-phospho-alpha-D-ribose 1-diphosphate + ATP. It functions in the pathway amino-acid biosynthesis; L-histidine biosynthesis; L-histidine from 5-phospho-alpha-D-ribose 1-diphosphate: step 1/9. Feedback inhibited by histidine. Its function is as follows. Catalyzes the condensation of ATP and 5-phosphoribose 1-diphosphate to form N'-(5'-phosphoribosyl)-ATP (PR-ATP). Has a crucial role in the pathway because the rate of histidine biosynthesis seems to be controlled primarily by regulation of HisG enzymatic activity. The polypeptide is ATP phosphoribosyltransferase (Pelodictyon phaeoclathratiforme (strain DSM 5477 / BU-1)).